The primary structure comprises 351 residues: MYSLFRPLLFTCDAERAHDISLRTLDIAYHSGALPLLTRHTRPLPTTAFGLNFPNPVGLAAGLDKNGTHIDALFALGFGFIEIGTTTPRPQAGNPKPRLFRLTQQQAVINRMGFNNLGVDALVRNVAGARRRNGPLGINIGKNKDTPNEQASNDYRYCLERVYALADYVTINLSSPNTAGLRALQEEQTLRRLIGELRETQETLAAKHGRHVPMLIKMAPDLSDSDIDAAARVLNEMSVDGVIATNTTVTRPLLRQHPLASEAGGLSGAPLLGQSTLVLRRLRTHLPETIDLIGVGGICCGADAGAKMAAGASLVQCYTGLIFKGPQLVGECVEAIRRRLEASSSGRENTQ.

Residues 61–65 and Thr85 each bind FMN; that span reads AGLDK. Residue Lys65 participates in substrate binding. Substrate is bound at residue 110–114; sequence NRMGF. Residues Asn139 and Asn172 each contribute to the FMN site. Asn172 contacts substrate. The Nucleophile role is filled by Ser175. Position 177 (Asn177) interacts with substrate. FMN-binding residues include Lys217 and Thr245. 246 to 247 is a binding site for substrate; that stretch reads NT. FMN contacts are provided by residues Gly268, Gly297, and 318-319; that span reads YT.

The protein belongs to the dihydroorotate dehydrogenase family. Type 2 subfamily. As to quaternary structure, monomer. FMN serves as cofactor.

It is found in the cell membrane. The catalysed reaction is (S)-dihydroorotate + a quinone = orotate + a quinol. It functions in the pathway pyrimidine metabolism; UMP biosynthesis via de novo pathway; orotate from (S)-dihydroorotate (quinone route): step 1/1. In terms of biological role, catalyzes the conversion of dihydroorotate to orotate with quinone as electron acceptor. The sequence is that of Dihydroorotate dehydrogenase (quinone) from Xylella fastidiosa (strain M23).